Here is a 211-residue protein sequence, read N- to C-terminus: Dual specificity protein phosphatase 26 (211 aa).

The 148-residue stretch at 60–207 folds into the Tyrosine-protein phosphatase domain; it reads NHADEVWPGL…LLALDRRLRQ (148 aa). Residue C152 is the Phosphocysteine intermediate of the active site.

The protein belongs to the protein-tyrosine phosphatase family. Non-receptor class dual specificity subfamily. Interacts with HSF4.

The protein resides in the cytoplasm. It localises to the nucleus. It is found in the golgi apparatus. It carries out the reaction O-phospho-L-tyrosyl-[protein] + H2O = L-tyrosyl-[protein] + phosphate. The catalysed reaction is O-phospho-L-seryl-[protein] + H2O = L-seryl-[protein] + phosphate. The enzyme catalyses O-phospho-L-threonyl-[protein] + H2O = L-threonyl-[protein] + phosphate. Functionally, inactivates MAPK1 and MAPK3 which leads to dephosphorylation of heat shock factor protein 4 and a reduction in its DNA-binding activity. This chain is Dual specificity protein phosphatase 26 (Dusp26), found in Rattus norvegicus (Rat).